We begin with the raw amino-acid sequence, 224 residues long: Phosphoglycolate phosphatase (224 aa).

The active-site Nucleophile is the Asp10. Residues Asp10, Asp12, and Asp176 each contribute to the Mg(2+) site.

This sequence belongs to the HAD-like hydrolase superfamily. CbbY/CbbZ/Gph/YieH family. The cofactor is Mg(2+).

The catalysed reaction is 2-phosphoglycolate + H2O = glycolate + phosphate. The protein operates within organic acid metabolism; glycolate biosynthesis; glycolate from 2-phosphoglycolate: step 1/1. Its function is as follows. Specifically catalyzes the dephosphorylation of 2-phosphoglycolate. Is involved in the dissimilation of the intracellular 2-phosphoglycolate formed during the DNA repair of 3'-phosphoglycolate ends, a major class of DNA lesions induced by oxidative stress. The sequence is that of Phosphoglycolate phosphatase from Pasteurella multocida (strain Pm70).